Reading from the N-terminus, the 451-residue chain is UPF0210 protein APL_1491 (451 aa).

The protein belongs to the UPF0210 family. As to quaternary structure, homodimer.

This Actinobacillus pleuropneumoniae serotype 5b (strain L20) protein is UPF0210 protein APL_1491.